The chain runs to 858 residues: MQEQYNPQEIEQKVQQHWDDSETFVVSEDPNKEKFYCLSMFPYPSGRLHMGHVRNYTIGDVVSRFQRLQGKNVMQPIGWDAFGLPAENAAVKNNTAPAPWTYENIEYMKNQLKLLGFGYDWKREFATCTPEYYRWEQEFFTKLYEQGLVYKKTSSVNWCPNDQTVLANEQVEDGCCWRCDTPVEQKKIPQWFIKITEYAQELLDDLDNLEGWPEMVKTMQRNWIGRSEGVELSFAVNGEEAPLEVYTTRPDTLMGVSYVGIAAGHPLAEKASKNNPELAAFVEECRNTKVAEAELATMEKKGMDTGLTAIHPLNGRVVPVYVANFVLMDYGTGAVMAVPAHDQRDYEFATKYGIDIIPVIKPEDGSELDVSEAAYTEKGVLFDSGEFDGLAFQEAFDAIAAKLEAEGKGKKTVNFRLRDWGVSRQRYWGAPIPMVTTEDGEVHPVPADQLPVILPEDVVMDGVTSPIKADKSWAETTFNGEPALRETDTFDTFMESSWYYARYCSPQADDILDPEKANYWLPVDQYVGGIEHACMHLLYSRFFHKLLRDAGYVTSDEPFKQLLCQGMVLADAFYHENEKGTKEWIAPTDVTVERDGKGRIEKAVDDQGREVEHSGMIKMSKSKNNGIDPQEMVDKYGADTVRLFMMFASPADMTLEWQESGVEGANRFLKRVWKLVHAHSSKGAAETVDASALSGNQKALRRDIHKTIAKVTDDIGRRQTFNTAIAAIMELMNKLAKAPQESVQDRAILDEALKAVVRMLYPMTPHISYEMWIALGESNVDSATWPTFDEKALVEDEKTIVVMINGKLRAKLTVAADATEEQVRELGLNDENAKKFLDGLTIRKVIFVPGKLLNIVAN.

The short motif at 42–52 (PYPSGRLHMGH) is the 'HIGH' region element. The 'KMSKS' region motif lies at 618–622 (KMSKS). Lysine 621 serves as a coordination point for ATP.

This sequence belongs to the class-I aminoacyl-tRNA synthetase family.

Its subcellular location is the cytoplasm. It catalyses the reaction tRNA(Leu) + L-leucine + ATP = L-leucyl-tRNA(Leu) + AMP + diphosphate. The chain is Leucine--tRNA ligase from Vibrio atlanticus (strain LGP32) (Vibrio splendidus (strain Mel32)).